A 685-amino-acid polypeptide reads, in one-letter code: Translation factor GUF1 homolog, mitochondrial (685 aa).

The N-terminal 54 residues, 1–54 (MFSRLLNRGNGGVNKNITSGLLLRRTTTTTTRLSYINNSPTLSIRSFCSKSTTI), are a transit peptide targeting the mitochondrion. Positions 68 to 267 (DRIRNFSIIA…AVIDRIPPPQ (200 aa)) constitute a tr-type G domain. GTP-binding positions include 77-84 (AHIDHGKT), 160-164 (DTPGH), and 214-217 (NKID).

Belongs to the TRAFAC class translation factor GTPase superfamily. Classic translation factor GTPase family. LepA subfamily.

The protein resides in the mitochondrion inner membrane. The enzyme catalyses GTP + H2O = GDP + phosphate + H(+). Functionally, promotes mitochondrial protein synthesis. May act as a fidelity factor of the translation reaction, by catalyzing a one-codon backward translocation of tRNAs on improperly translocated ribosomes. Binds to mitochondrial ribosomes in a GTP-dependent manner. This chain is Translation factor GUF1 homolog, mitochondrial (guf1), found in Dictyostelium discoideum (Social amoeba).